The following is a 207-amino-acid chain: MSEVLDLSAEARERAGKGASRAIRREGRVPAVIYGEKQEPASIHVEEKVLMKLLHTGHFFNSVVMLDVGGKKVRTLPKDVQFHPVTDRPLHVDFLRIGEHTKVNVNVPVHFKDEELSPGLKRGGVLNVVIHDLGLSVDAAEIPEEIVISLKGLEVGESIHLSQVALPKGASAQDHEDITIATIVAPSALKSAEGEEAAEAGEEAAEG.

Belongs to the bacterial ribosomal protein bL25 family. CTC subfamily. As to quaternary structure, part of the 50S ribosomal subunit; part of the 5S rRNA/L5/L18/L25 subcomplex. Contacts the 5S rRNA. Binds to the 5S rRNA independently of L5 and L18.

This is one of the proteins that binds to the 5S RNA in the ribosome where it forms part of the central protuberance. This chain is Large ribosomal subunit protein bL25, found in Rhizorhabdus wittichii (strain DSM 6014 / CCUG 31198 / JCM 15750 / NBRC 105917 / EY 4224 / RW1) (Sphingomonas wittichii).